The following is a 142-amino-acid chain: Large-conductance mechanosensitive channel (142 aa).

Transmembrane regions (helical) follow at residues 10-30, 40-60, and 86-106; these read FAVK…GAFG, LIMP…LFIV, and GNFI…FVMV.

Belongs to the MscL family. Homopentamer.

It is found in the cell inner membrane. Its function is as follows. Channel that opens in response to stretch forces in the membrane lipid bilayer. May participate in the regulation of osmotic pressure changes within the cell. This Acidovorax ebreus (strain TPSY) (Diaphorobacter sp. (strain TPSY)) protein is Large-conductance mechanosensitive channel.